Reading from the N-terminus, the 77-residue chain is U8-lycotoxin-Ls1f (77 aa).

Positions 1–20 (MKLIIFTGLVLFAIVSLIEV) are cleaved as a signal peptide. Residues 21 to 26 (QADNER) constitute a propeptide that is removed on maturation.

It belongs to the neurotoxin 19 (CSTX) family. 08 (U8-Lctx) subfamily. In terms of processing, contains 4 disulfide bonds. Expressed by the venom gland.

It is found in the secreted. The polypeptide is U8-lycotoxin-Ls1f (Lycosa singoriensis (Wolf spider)).